The chain runs to 915 residues: Protein SLFN14 (915 aa).

A compositionally biased stretch (basic residues) spans Ala-157–Pro-167. Positions Ala-157–Gln-176 are disordered. The interval Glu-204–Gln-389 is required for endoribonuclease activity. Positions Arg-390 to Leu-569 are required for ribosome binding.

As to quaternary structure, associates with ribosomes in an ATP-independent manner. Mg(2+) serves as cofactor. The cofactor is Mn(2+). Detected in reticulocytes (at protein level).

The protein localises to the nucleus. Shows no ribosome-associated and endoribonuclease activities. In terms of biological role, displays polysome-associated endoribonuclease activity towards mRNAs and rRNAs. May play a role in RNA surveillance pathways by recognizing stalled ribosomes and triggering endonucleolytic cleavage of aberrant mRNAs. Cleaves RNAs in a magnesium-, manganese-dependent and ATP-independent manner. Involved in correct maturation of megakaryocytes and especially important for proplatelet extension. This is Protein SLFN14 from Oryctolagus cuniculus (Rabbit).